Here is a 199-residue protein sequence, read N- to C-terminus: Peroxiredoxin-2 (199 aa).

The Thioredoxin domain occupies 7-165 (AHVGKPAPEF…ALRLVQAFQY (159 aa)). Cysteine 52 (cysteine sulfenic acid (-SOH) intermediate) is an active-site residue. Serine 113 carries the phosphoserine modification. At threonine 183 the chain carries Phosphothreonine. An N6-acetyllysine modification is found at lysine 197.

Belongs to the peroxiredoxin family. AhpC/Prx1 subfamily. Homodimer; disulfide-linked, upon oxidation. 5 homodimers assemble to form a ring-like decamer. Interacts with TIPIN. The enzyme can be inactivated by further oxidation of the cysteine sulfenic acid (C(P)-SOH) to sulphinic acid (C(P)-SO2H) instead of its condensation to a disulfide bond. It can be reactivated by forming a transient disulfide bond with sulfiredoxin SRXN1, which reduces the cysteine sulfinic acid in an ATP- and Mg-dependent manner. In terms of processing, acetylation increases resistance to transition to high molecular-mass complexes. Deacetylated by HDAC6 which decreases reducing activity.

The protein localises to the cytoplasm. It carries out the reaction a hydroperoxide + [thioredoxin]-dithiol = an alcohol + [thioredoxin]-disulfide + H2O. In terms of biological role, thiol-specific peroxidase that catalyzes the reduction of hydrogen peroxide and organic hydroperoxides to water and alcohols, respectively. Plays a role in cell protection against oxidative stress by detoxifying peroxides and as sensor of hydrogen peroxide-mediated signaling events. Might participate in the signaling cascades of growth factors and tumor necrosis factor-alpha by regulating the intracellular concentrations of H(2)O(2). This Bos taurus (Bovine) protein is Peroxiredoxin-2 (PRDX2).